A 295-amino-acid chain; its full sequence is ATP synthase gamma chain (295 aa).

This sequence belongs to the ATPase gamma chain family. F-type ATPases have 2 components, CF(1) - the catalytic core - and CF(0) - the membrane proton channel. CF(1) has five subunits: alpha(3), beta(3), gamma(1), delta(1), epsilon(1). CF(0) has three main subunits: a, b and c.

Its subcellular location is the cell inner membrane. Functionally, produces ATP from ADP in the presence of a proton gradient across the membrane. The gamma chain is believed to be important in regulating ATPase activity and the flow of protons through the CF(0) complex. This Maricaulis maris (strain MCS10) (Caulobacter maris) protein is ATP synthase gamma chain.